The sequence spans 173 residues: Crossover junction endodeoxyribonuclease RuvC (173 aa).

Catalysis depends on residues Asp8, Glu67, and Asp139. Mg(2+)-binding residues include Asp8, Glu67, and Asp139.

The protein belongs to the RuvC family. In terms of assembly, homodimer which binds Holliday junction (HJ) DNA. The HJ becomes 2-fold symmetrical on binding to RuvC with unstacked arms; it has a different conformation from HJ DNA in complex with RuvA. In the full resolvosome a probable DNA-RuvA(4)-RuvB(12)-RuvC(2) complex forms which resolves the HJ. Mg(2+) serves as cofactor.

Its subcellular location is the cytoplasm. The catalysed reaction is Endonucleolytic cleavage at a junction such as a reciprocal single-stranded crossover between two homologous DNA duplexes (Holliday junction).. Its function is as follows. The RuvA-RuvB-RuvC complex processes Holliday junction (HJ) DNA during genetic recombination and DNA repair. Endonuclease that resolves HJ intermediates. Cleaves cruciform DNA by making single-stranded nicks across the HJ at symmetrical positions within the homologous arms, yielding a 5'-phosphate and a 3'-hydroxyl group; requires a central core of homology in the junction. The consensus cleavage sequence is 5'-(A/T)TT(C/G)-3'. Cleavage occurs on the 3'-side of the TT dinucleotide at the point of strand exchange. HJ branch migration catalyzed by RuvA-RuvB allows RuvC to scan DNA until it finds its consensus sequence, where it cleaves and resolves the cruciform DNA. The chain is Crossover junction endodeoxyribonuclease RuvC from Salmonella arizonae (strain ATCC BAA-731 / CDC346-86 / RSK2980).